We begin with the raw amino-acid sequence, 219 residues long: Orotate phosphoribosyltransferase (219 aa).

5-phospho-alpha-D-ribose 1-diphosphate is bound at residue Lys26. Position 34–35 (34–35) interacts with orotate; it reads FF. 5-phospho-alpha-D-ribose 1-diphosphate-binding positions include 72–73, Arg98, Lys99, Lys102, His104, and 124–132; these read YK and DDVITAGTA. Residues Thr128 and Arg156 each contribute to the orotate site.

It belongs to the purine/pyrimidine phosphoribosyltransferase family. PyrE subfamily. In terms of assembly, homodimer. The cofactor is Mg(2+).

The enzyme catalyses orotidine 5'-phosphate + diphosphate = orotate + 5-phospho-alpha-D-ribose 1-diphosphate. Its pathway is pyrimidine metabolism; UMP biosynthesis via de novo pathway; UMP from orotate: step 1/2. Catalyzes the transfer of a ribosyl phosphate group from 5-phosphoribose 1-diphosphate to orotate, leading to the formation of orotidine monophosphate (OMP). The sequence is that of Orotate phosphoribosyltransferase from Xanthomonas euvesicatoria pv. vesicatoria (strain 85-10) (Xanthomonas campestris pv. vesicatoria).